Consider the following 566-residue polypeptide: MVVFGNVSAANLPYQNGFLEALSSGGCELMGHSFRVPTSQALKTRTRRRSTAGPLQVVCVDIPRPELENTVNFLEAASLSASFRSAPRPAKPLKVVIAGAGLAGLSTAKYLADAGHKPLLLEARDVLGGKIAAWKDEDGDWYETGLHIFFGAYPNVQNLFGELGINDRLQWKEHSMIFAMPSKPGEFSRFDFPDVLPAPLNGIWAILRNNEMLTWPEKIKFAIGLLPAMVGGQAYVEAQDGLSVKEWMEKQGVPERVTDEVFIAMSKALNFINPDELSMQCILIALNRFLQEKHGSKMAFLDGNPPERLCMPVVDHIRSLGGEVQLNSRIKKIELNDDGTVKSFLLTNGSTVEGDAYVFAAPVDILKLLLPDPWKEIPYFKKLDKLVGVPVINVHIWFDRKLKNTYDHLLFSRSNLLSVYADMSLTCKEYYDPNRSMLELVFAPAEEWISRTDSDIIDATMKELEKLFPDEISADQSKAKILKYHVVKTPRSVYKTIPNCEPCRPLQRSPIEGFYLAGDYTKQKYLASMEGAVLSGKFCSQSIVQDYELLAASGPRKLSEATVSSS.

The transit peptide at 1–86 (MVVFGNVSAA…ASLSASFRSA (86 aa)) directs the protein to the chloroplast and chromoplast. FAD contacts are provided by residues A103, 122–123 (EA), K130, 147–148 (HI), and Y153. Residue R288 participates in substrate binding. FAD contacts are provided by I330 and D519. A527 lines the substrate pocket. An FAD-binding site is contributed by M529.

This sequence belongs to the carotenoid/retinoid oxidoreductase family. As to quaternary structure, homotetramer. The cofactor is FAD.

The protein resides in the plastid. It localises to the chloroplast. It is found in the chromoplast. The protein localises to the membrane. The catalysed reaction is 2 a plastoquinone + 15-cis-phytoene = 9,9',15-tri-cis-zeta-carotene + 2 a plastoquinol. Its pathway is carotenoid biosynthesis; lycopene biosynthesis. Its function is as follows. Converts phytoene into zeta-carotene via the intermediary of phytofluene by the symmetrical introduction of two double bonds at the C-11 and C-11' positions of phytoene with a concomitant isomerization of two neighboring double bonds at the C9 and C9' positions from trans to cis. The protein is 15-cis-phytoene desaturase, chloroplastic/chromoplastic (PDS) of Arabidopsis thaliana (Mouse-ear cress).